A 781-amino-acid polypeptide reads, in one-letter code: MKKNYYTVLSLSILTALYSTSSQANLQQQCLIGVPHFQGEIVQGDPNELPVYIEADHAKMNQSTHAQYEGNVNVKQGNRHLTAGMIEIEQHGKDNAKRYAYAKNGFDYKDNLIQLNGDNAKIHLDSKDANIQDADYQLVGRQGRGTADEVELREHYRVMKNATFTSCLPNSDAWSIEAKEMRQHIQEEYAEMWHARFKVSGIPIFYTPYLQLPIGDRRRSGLLIPKAGISTRHGYWYAQPFYWNIAPNFDATFTPKYMSHRGWQLNAETRYLTRIGEGKFVVEYLKTDRHSDSLNTARSRHLFYWGHNSHFLKDWRLNVNYTKVSDKHYFNDFESEYGNSTDGYVDQQASISYYQPNYNLSISAKQFQIFDKVDIGPYRALPQIDFNYYRNEIANGLVDFSLFSQVVRFDNDSALMPTAWRFHIEPSLTFPLSNRYGSLNIETKLYATRYLQKRGKGENAEEIKKTVNRVLPQIKLDFQTVLANRQSFIEGYTQTLEPKFQYLYRPYKDQSDIGLKQQNNDYLGFGYDSTLLQQDYFSLFRDRRYSGLDRIVSANQITLGGTTRFYDKNANERFNLSIGQIYYLKDSRTDNNPQNMAQGRSSSWSLESNWRINSKWNWRGSYQYDTHLNQTSLANTVLEYNSEKNNLIQLSYRYVNQSYIDQNLIGKNTYGQSIKQLGMTTAWELTDHWTLVGRYYQDLALKKPVEQYLGIQYNSCCWSIGVGARRYVTNRANQRNDEVLYDNSLSLTFELRGLSPSDHKNNIDEMLKKGKLPYIKAFSLY.

A signal peptide spans 1–24 (MKKNYYTVLSLSILTALYSTSSQA).

Belongs to the LptD family. In terms of assembly, component of the lipopolysaccharide transport and assembly complex. Interacts with LptE and LptA.

Its subcellular location is the cell outer membrane. In terms of biological role, together with LptE, is involved in the assembly of lipopolysaccharide (LPS) at the surface of the outer membrane. The polypeptide is LPS-assembly protein LptD (Histophilus somni (strain 129Pt) (Haemophilus somnus)).